Here is a 449-residue protein sequence, read N- to C-terminus: Putative F-box/LRR-repeat protein At3g44090 (449 aa).

Residues 23-77 (LASMDCLPDDLLVQILYFLPTKEAISTSLLSKRWRTLYSLVHNLDLDDYIFWHHE) form the F-box domain. LRR repeat units follow at residues 133-163 (YYNLQKDSLWQFGFPYKVFTSTKLVKLSLGT), 186-212 (YIWFEDNQLSDVFLAACPALEDLTIHH), 214-231 (FRPFLISSKNLKKLSVTI), 247-278 (TPNVVDLYYSDFPRPIAPHCHLDSLAKVELDL), 286-311 (RQVQNDADVKNLISEIRNVKTLHLTY), and 320-345 (SKKRDWKVLPLLLERSPNLKTLVLSG).

In Arabidopsis thaliana (Mouse-ear cress), this protein is Putative F-box/LRR-repeat protein At3g44090.